The chain runs to 246 residues: Ly6/PLAUR domain-containing protein 4 (246 aa).

Residues 1-26 (MILQAWRSLQLLYLLEAISLLPCTEA) form the signal peptide. Asn-117 carries N-linked (GlcNAc...) asparagine glycosylation. In terms of domain architecture, UPAR/Ly6 spans 142–223 (CPSCVGKHDQ…INVLDKSEAV (82 aa)). Ala-225 carries the GPI-anchor amidated alanine lipid modification. Residues 226–246 (GHCSQGISWSVLLCLLILLRD) constitute a propeptide, removed in mature form.

It localises to the cell membrane. The chain is Ly6/PLAUR domain-containing protein 4 (Lypd4) from Mus musculus (Mouse).